Here is a 218-residue protein sequence, read N- to C-terminus: Imidazole glycerol phosphate synthase subunit HisH (218 aa).

The region spanning 7–211 (STVIIDTGCA…LALDKASLDA (205 aa)) is the Glutamine amidotransferase type-1 domain. Cysteine 82 (nucleophile) is an active-site residue. Residues histidine 186 and glutamate 188 contribute to the active site.

Heterodimer of HisH and HisF.

It localises to the cytoplasm. It carries out the reaction 5-[(5-phospho-1-deoxy-D-ribulos-1-ylimino)methylamino]-1-(5-phospho-beta-D-ribosyl)imidazole-4-carboxamide + L-glutamine = D-erythro-1-(imidazol-4-yl)glycerol 3-phosphate + 5-amino-1-(5-phospho-beta-D-ribosyl)imidazole-4-carboxamide + L-glutamate + H(+). The enzyme catalyses L-glutamine + H2O = L-glutamate + NH4(+). Its pathway is amino-acid biosynthesis; L-histidine biosynthesis; L-histidine from 5-phospho-alpha-D-ribose 1-diphosphate: step 5/9. In terms of biological role, IGPS catalyzes the conversion of PRFAR and glutamine to IGP, AICAR and glutamate. The HisH subunit catalyzes the hydrolysis of glutamine to glutamate and ammonia as part of the synthesis of IGP and AICAR. The resulting ammonia molecule is channeled to the active site of HisF. This Shewanella sediminis (strain HAW-EB3) protein is Imidazole glycerol phosphate synthase subunit HisH.